The chain runs to 505 residues: 6-phosphofructo-2-kinase/fructose-2,6-bisphosphatase 2 (505 aa).

The tract at residues 1–20 is disordered; the sequence is MSGASSSEQNNNSYETKTPN. Serine 2 carries the post-translational modification N-acetylserine. Positions 2–248 are 6-phosphofructo-2-kinase; sequence SGASSSEQNN…VYYLMNIHVQ (247 aa). Serine 29 carries the post-translational modification Phosphoserine; by PKA. Residue 45-53 coordinates ATP; it reads GLPARGKTY. Positions 78 and 102 each coordinate beta-D-fructose 6-phosphate. Aspartate 128 is an active-site residue. Positions 130 and 136 each coordinate beta-D-fructose 6-phosphate. Cysteine 158 is a catalytic residue. 167 to 172 is a binding site for ATP; the sequence is NILEVK. Beta-D-fructose 6-phosphate-binding residues include lysine 172, arginine 193, and tyrosine 197. Positions 249–505 are fructose-2,6-bisphosphatase; the sequence is PRTIYLCRHG…RAQDMQEGAD (257 aa). Beta-D-fructose 2,6-bisphosphate is bound at residue arginine 256. Histidine 257 (tele-phosphohistidine intermediate) is an active-site residue. Positions 263 and 269 each coordinate beta-D-fructose 2,6-bisphosphate. Glutamate 326 acts as the Proton donor/acceptor in catalysis. 6 residues coordinate beta-D-fructose 2,6-bisphosphate: tyrosine 337, arginine 351, lysine 355, tyrosine 366, glutamine 392, and arginine 396. Residue 348-351 coordinates ATP; sequence FALR. Residues 392–396 and tyrosine 428 each bind ATP; that span reads QAVMR. The tract at residues 445–505 is disordered; sequence HRDKPTNNFP…RAQDMQEGAD (61 aa). Over residues 450–476 the composition is skewed to polar residues; it reads TNNFPKNQTPVRMRRNSFTPLSSSNTI. Serine 466 carries the phosphoserine; by AMPK modification. Phosphothreonine is present on residues threonine 468 and threonine 475. Serine 483 bears the Phosphoserine; by BRAF mark. Serine 486 and serine 493 each carry phosphoserine.

It in the C-terminal section; belongs to the phosphoglycerate mutase family. As to quaternary structure, homodimer. Forms a heterodimer with PFKFB3. Post-translationally, phosphorylation by AMPK stimulates activity. In terms of tissue distribution, heart.

It carries out the reaction beta-D-fructose 2,6-bisphosphate + H2O = beta-D-fructose 6-phosphate + phosphate. The enzyme catalyses beta-D-fructose 6-phosphate + ATP = beta-D-fructose 2,6-bisphosphate + ADP + H(+). Phosphorylation results in the activation of the kinase activity. Its function is as follows. Synthesis and degradation of fructose 2,6-bisphosphate. This is 6-phosphofructo-2-kinase/fructose-2,6-bisphosphatase 2 from Homo sapiens (Human).